The chain runs to 155 residues: SsrA-binding protein (155 aa).

It belongs to the SmpB family.

Its subcellular location is the cytoplasm. Functionally, required for rescue of stalled ribosomes mediated by trans-translation. Binds to transfer-messenger RNA (tmRNA), required for stable association of tmRNA with ribosomes. tmRNA and SmpB together mimic tRNA shape, replacing the anticodon stem-loop with SmpB. tmRNA is encoded by the ssrA gene; the 2 termini fold to resemble tRNA(Ala) and it encodes a 'tag peptide', a short internal open reading frame. During trans-translation Ala-aminoacylated tmRNA acts like a tRNA, entering the A-site of stalled ribosomes, displacing the stalled mRNA. The ribosome then switches to translate the ORF on the tmRNA; the nascent peptide is terminated with the 'tag peptide' encoded by the tmRNA and targeted for degradation. The ribosome is freed to recommence translation, which seems to be the essential function of trans-translation. The chain is SsrA-binding protein from Gloeothece citriformis (strain PCC 7424) (Cyanothece sp. (strain PCC 7424)).